The following is a 397-amino-acid chain: Elongation factor Tu (397 aa).

Residues 10-206 form the tr-type G domain; that stretch reads KPHVNIGTIG…AIDSYIPTPE (197 aa). A G1 region spans residues 19-26; it reads GHVDHGKT. A GTP-binding site is contributed by 19 to 26; the sequence is GHVDHGKT. Thr-26 contacts Mg(2+). The G2 stretch occupies residues 60–64; it reads GITIN. Positions 81-84 are G3; it reads DCPG. GTP is bound by residues 81–85 and 136–139; these read DCPGH and NKAD. Residues 136–139 form a G4 region; the sequence is NKAD. A G5 region spans residues 174–176; the sequence is SAL.

The protein belongs to the TRAFAC class translation factor GTPase superfamily. Classic translation factor GTPase family. EF-Tu/EF-1A subfamily. As to quaternary structure, monomer.

Its subcellular location is the cytoplasm. The enzyme catalyses GTP + H2O = GDP + phosphate + H(+). Its function is as follows. GTP hydrolase that promotes the GTP-dependent binding of aminoacyl-tRNA to the A-site of ribosomes during protein biosynthesis. This is Elongation factor Tu from Clostridium botulinum (strain Loch Maree / Type A3).